The primary structure comprises 291 residues: HTH-type transcriptional regulator CitR (291 aa).

The 58-residue stretch at 1 to 58 folds into the HTH lysR-type domain; sequence MDFKWLHTFVTAAKYENFRKTAETLFLSQPTVTVHIKQLEKEISCKLFERKGRQIQLT. A DNA-binding region (H-T-H motif) is located at residues 18 to 37; the sequence is FRKTAETLFLSQPTVTVHIK.

This sequence belongs to the LysR transcriptional regulatory family.

Its subcellular location is the cytoplasm. In terms of biological role, negative regulatory protein for the citA gene for citrate synthase I. This Bacillus subtilis (strain 168) protein is HTH-type transcriptional regulator CitR (citR).